The chain runs to 159 residues: Cytochrome c-type biogenesis protein CcmE (159 aa).

The Cytoplasmic portion of the chain corresponds to 1 to 7 (MTPRQRR). Residues 8 to 28 (LGMLLAALACAGIALALVLNA) form a helical; Signal-anchor for type II membrane protein membrane-spanning segment. The Periplasmic segment spans residues 29-159 (FRSNLVFFFS…LAEGERETQR (131 aa)). Heme is bound by residues His-123 and Tyr-127.

It belongs to the CcmE/CycJ family.

It is found in the cell inner membrane. Heme chaperone required for the biogenesis of c-type cytochromes. Transiently binds heme delivered by CcmC and transfers the heme to apo-cytochromes in a process facilitated by CcmF and CcmH. The sequence is that of Cytochrome c-type biogenesis protein CcmE from Cupriavidus pinatubonensis (strain JMP 134 / LMG 1197) (Cupriavidus necator (strain JMP 134)).